The sequence spans 279 residues: Protease HtpX homolog (279 aa).

The next 2 helical transmembrane spans lie at 6 to 26 (VFVL…ALGG) and 29 to 49 (GAIL…WGSS). H130 contributes to the Zn(2+) binding site. E131 is a catalytic residue. A Zn(2+)-binding site is contributed by H134. 2 helical membrane-spanning segments follow: residues 145–165 (IAAT…FFGG) and 176–196 (VAGI…QFAI). E201 serves as a coordination point for Zn(2+).

Belongs to the peptidase M48B family. It depends on Zn(2+) as a cofactor.

The protein resides in the cell inner membrane. The sequence is that of Protease HtpX homolog from Gemmatimonas aurantiaca (strain DSM 14586 / JCM 11422 / NBRC 100505 / T-27).